The chain runs to 294 residues: Formamidopyrimidine-DNA glycosylase (294 aa).

Catalysis depends on Pro2, which acts as the Schiff-base intermediate with DNA. Glu3 acts as the Proton donor in catalysis. The active-site Proton donor; for beta-elimination activity is Lys58. DNA is bound by residues His105, Arg124, and Lys167. An FPG-type zinc finger spans residues 258–294 (QVYDREGEPCRTRGCKGTVKRFTQNGRSTFWCPSCQK). Arg284 serves as the catalytic Proton donor; for delta-elimination activity.

Belongs to the FPG family. In terms of assembly, monomer. It depends on Zn(2+) as a cofactor.

It carries out the reaction Hydrolysis of DNA containing ring-opened 7-methylguanine residues, releasing 2,6-diamino-4-hydroxy-5-(N-methyl)formamidopyrimidine.. It catalyses the reaction 2'-deoxyribonucleotide-(2'-deoxyribose 5'-phosphate)-2'-deoxyribonucleotide-DNA = a 3'-end 2'-deoxyribonucleotide-(2,3-dehydro-2,3-deoxyribose 5'-phosphate)-DNA + a 5'-end 5'-phospho-2'-deoxyribonucleoside-DNA + H(+). Involved in base excision repair of DNA damaged by oxidation or by mutagenic agents. Acts as a DNA glycosylase that recognizes and removes damaged bases. Has a preference for oxidized purines, such as 7,8-dihydro-8-oxoguanine (8-oxoG). Has AP (apurinic/apyrimidinic) lyase activity and introduces nicks in the DNA strand. Cleaves the DNA backbone by beta-delta elimination to generate a single-strand break at the site of the removed base with both 3'- and 5'-phosphates. The chain is Formamidopyrimidine-DNA glycosylase from Afipia carboxidovorans (strain ATCC 49405 / DSM 1227 / KCTC 32145 / OM5) (Oligotropha carboxidovorans).